We begin with the raw amino-acid sequence, 347 residues long: S-adenosylmethionine decarboxylase proenzyme 4 (347 aa).

Residues E7 and E10 contribute to the active site. E66 is a substrate binding site. S67 serves as the catalytic Schiff-base intermediate with substrate; via pyruvic acid. The residue at position 67 (S67) is a Pyruvic acid (Ser); by autocatalysis. C81 (proton donor; for catalytic activity) is an active-site residue. Residues S237 and H250 each act as proton acceptor; for processing activity in the active site. Residue E254 coordinates substrate.

Belongs to the eukaryotic AdoMetDC family. Requires pyruvate as cofactor. Is synthesized initially as an inactive proenzyme. Formation of the active enzyme involves a self-maturation process in which the active site pyruvoyl group is generated from an internal serine residue via an autocatalytic post-translational modification. Two non-identical subunits are generated from the proenzyme in this reaction, and the pyruvate is formed at the N-terminus of the alpha chain, which is derived from the carboxyl end of the proenzyme. The post-translation cleavage follows an unusual pathway, termed non-hydrolytic serinolysis, in which the side chain hydroxyl group of the serine supplies its oxygen atom to form the C-terminus of the beta chain, while the remainder of the serine residue undergoes an oxidative deamination to produce ammonia and the pyruvoyl group blocking the N-terminus of the alpha chain.

It catalyses the reaction S-adenosyl-L-methionine + H(+) = S-adenosyl 3-(methylsulfanyl)propylamine + CO2. It participates in amine and polyamine biosynthesis; S-adenosylmethioninamine biosynthesis; S-adenosylmethioninamine from S-adenosyl-L-methionine: step 1/1. Functionally, essential for biosynthesis of the polyamines spermidine and spermine. Essential for polyamine homeostasis, and normal plant embryogenesis, growth and development. The chain is S-adenosylmethionine decarboxylase proenzyme 4 from Arabidopsis thaliana (Mouse-ear cress).